Here is a 475-residue protein sequence, read N- to C-terminus: 3-isopropylmalate dehydratase large subunit (475 aa).

[4Fe-4S] cluster is bound by residues Cys352, Cys413, and Cys416.

It belongs to the aconitase/IPM isomerase family. LeuC type 1 subfamily. Heterodimer of LeuC and LeuD. It depends on [4Fe-4S] cluster as a cofactor.

It catalyses the reaction (2R,3S)-3-isopropylmalate = (2S)-2-isopropylmalate. Its pathway is amino-acid biosynthesis; L-leucine biosynthesis; L-leucine from 3-methyl-2-oxobutanoate: step 2/4. Its function is as follows. Catalyzes the isomerization between 2-isopropylmalate and 3-isopropylmalate, via the formation of 2-isopropylmaleate. The polypeptide is 3-isopropylmalate dehydratase large subunit (Pseudomonas syringae pv. tomato (strain ATCC BAA-871 / DC3000)).